The chain runs to 167 residues: uncharacterized protein (167 aa).

3 residues coordinate a divalent metal cation: histidine 48, histidine 127, and histidine 131.

It belongs to the DinB family.

This is an uncharacterized protein from Bacillus subtilis (strain 168).